A 435-amino-acid chain; its full sequence is Transcription factor tau 55 kDa subunit (435 aa).

Residues 362-417 are disordered; it reads GLLSPTEENETTNAGQSKGSSTANDPNIQIQEEDVGLPDSTNTSRDHTGDKEEVQS. Position 365 is a phosphoserine (Ser-365). Over residues 372 to 391 the composition is skewed to polar residues; that stretch reads TTNAGQSKGSSTANDPNIQI. The segment covering 405–417 has biased composition (basic and acidic residues); the sequence is SRDHTGDKEEVQS.

Component of the TFIIIC complex composed of TFC1, TFC3, TFC4, TFC6, TFC7 and TFC8. The subunits are organized in two globular domains, tauA and tauB, connected by a proteolysis-sensitive and flexible linker.

It localises to the nucleus. TFIIIC mediates tRNA and 5S RNA gene activation by binding to intragenic promoter elements. Upstream of the transcription start site, TFIIIC assembles the initiation complex TFIIIB-TFIIIC-tDNA, which is sufficient for RNA polymerase III recruitment and function. Part of the tauA domain of TFIIIC that binds boxA DNA promoter sites of tRNA and similar genes. In Saccharomyces cerevisiae (strain ATCC 204508 / S288c) (Baker's yeast), this protein is Transcription factor tau 55 kDa subunit (TFC7).